A 1193-amino-acid polypeptide reads, in one-letter code: DNA-directed RNA polymerase subunit beta (1193 aa).

Positions 1149-1162 (EEEIEMRDLEDEED) are enriched in acidic residues. The tract at residues 1149–1193 (EEEIEMRDLEDEEDAKQADGLALSGDEEPEETASADVERDVVTKE) is disordered. The span at 1184-1193 (DVERDVVTKE) shows a compositional bias: basic and acidic residues.

This sequence belongs to the RNA polymerase beta chain family. In terms of assembly, RNAP is composed of a core of 2 alpha, a beta and a beta' subunit. The core is associated with a delta subunit, and at least one of epsilon or omega. When a sigma factor is associated with the core the holoenzyme is formed, which can initiate transcription.

The catalysed reaction is RNA(n) + a ribonucleoside 5'-triphosphate = RNA(n+1) + diphosphate. Its function is as follows. DNA-dependent RNA polymerase catalyzes the transcription of DNA into RNA using the four ribonucleoside triphosphates as substrates. In Bacillus subtilis (strain 168), this protein is DNA-directed RNA polymerase subunit beta.